Here is a 146-residue protein sequence, read N- to C-terminus: VQWSAEEKQLISGLWGKVNVADCGAEALARLLIVYPWTQRFFASFGNLSSPTAILGNPMVRAHGKKVLTSFGDAVKNLDNIKNTFAQLSELHCDKLHVDPENFRLLGDILIIVLAAHFTKEFTPECQAAWQKLVRVVAHALARKYH.

Positions 2 to 146 constitute a Globin domain; that stretch reads QWSAEEKQLI…VAHALARKYH (145 aa). Heme b contacts are provided by H63 and H92.

The protein belongs to the globin family. As to quaternary structure, heterotetramer of two alpha chains and two beta chains. In terms of tissue distribution, red blood cells.

Involved in oxygen transport from the lung to the various peripheral tissues. In Struthio camelus (Common ostrich), this protein is Hemoglobin subunit beta (HBB).